Reading from the N-terminus, the 550-residue chain is Acyl-CoA-dependent acyltransferase MAC2 (550 aa).

Belongs to the trichothecene O-acetyltransferase family.

It functions in the pathway secondary metabolite biosynthesis. Its function is as follows. Acyl-CoA-dependent acyltransferase; part of the gene cluster that mediates the biosynthesis of mannosylerythritol lipids (MELs), surface-active substances that enhance the availability of water-insoluble substrates. Depending on the number of acetyl groups, mannosylerythritol lipids can be differentiated into MEL A (fully acetylated), MEL B and MEL C (monoacetylated at R-6 and R-4, respectively), and the fully deacetylated MEL D. The first step in the pathway is the generation of mannosylerythritol by the glycosyltransferase EMT1 which catalyzes the transfer of GDP-mannose to the C-4 atom of meso-erythritol. This reaction has to be stereospecific, since only mannosyl-D-erythritol is generated. The produced disaccharide is subsequently acylated with fatty acids of various lengths by the acyltransferases MAC1 and MAC2 at positions C-2 and C-3, repectively. The existence of MEL derivatives which carry an acetyl group at C-2 implies that at least MAC1 also accepts acetyl-CoA as a donor. The final step of MEL biosynthesis is the acetylation of the fully acylated mannosylerythritol lipids catalyzed by the acetyl-CoA-dependent acetyltransferase MAT1. MAT1 displays a relaxed regioselectivity and is able to transfer acetylgroups to both positions C-4 and C-6 of the mannosyl moiety. This chain is Acyl-CoA-dependent acyltransferase MAC2, found in Pseudozyma antarctica (strain T-34) (Yeast).